Here is a 548-residue protein sequence, read N- to C-terminus: Nonribosomal peptide synthetase 8 (548 aa).

Positions 1–77 (MNSLDQWRDT…QLRGENRSGP (77 aa)) constitute a Carrier domain. At serine 35 the chain carries O-(pantetheine 4'-phosphoryl)serine. Residues 122-537 (MAPISSIQEF…FKSLIAELAA (416 aa)) are condensation.

It belongs to the NRP synthetase family.

It participates in mycotoxin biosynthesis. Functionally, nonribosomal peptide synthetase; part of the gene cluster that mediates the biosynthesis of fumonisins B1 (FB1), B2 (FB2), B3 (FB3), and B4 (FB4), which are carcinogenic mycotoxins. Within the pathway FUM14 catalyzes esterification of CoA-activated tricarballylic acid to the C-14 and C-15 hydroxyls of the fumonisin backbone. The biosynthesis starts with the FUM1-catalyzed carbon chain assembly from one molecule of acetyl-CoA, eight molecules of malonyl-CoA, and two molecules of methionine (in S-adenosyl form). The C18 polyketide chain is released from the enzyme by a nucleophilic attack of a carbanion, which is derived from R-carbon of alanine by decarboxylation, on the carbonyl carbon of polyketide acyl chain. This step is catalyzed by the pyridoxal 5'-phosphate-dependent aminoacyl transferase FUM8. The resultant 3-keto intermediate is then stereospecifically reduced to a 3-hydroxyl product by reductase FUM13. Subsequent oxidations at C-10 by the cytochrome P450 monooxygenase FUM2, C-14 and C-15 by FUM6, FUM12 or FUM15, tricarballylic esterification of the hydroxyl groups on C-14 and C-15 by acyltransferase FUM14, and C-5 hydroxylation by 2-keto-glutarate-dependent dioxygenase FUM3 furnish the biosynthesis of fumonisins. The tricarballylic moieties are most likely derived from the citric acid cycle, and their addition to the carbon backbone may involve FUM7, FUM10, FUM11 and FUM14. This Gibberella moniliformis (strain M3125 / FGSC 7600) (Maize ear and stalk rot fungus) protein is Nonribosomal peptide synthetase 8.